The primary structure comprises 232 residues: Putative dimethylsulfoniopropionate lyase DddL (232 aa).

A divalent metal cation-binding residues include H154, E159, Y161, and H190.

Belongs to the non-heme iron-dependent dioxygenase family. As to quaternary structure, homodimer. The cofactor is a divalent metal cation.

The enzyme catalyses S,S-dimethyl-beta-propiothetin = acrylate + dimethyl sulfide + H(+). Functionally, may cleave dimethylsulfoniopropionate (DMSP), releasing dimethyl sulfide (DMS). DMS is the principal form by which sulfur is transported from oceans to the atmosphere. The real activity of the protein is however subject to debate and it is unclear whether it constitutes a real dimethylsulfoniopropionate lyase in vivo. The sequence is that of Putative dimethylsulfoniopropionate lyase DddL (dddL) from Cereibacter sphaeroides (strain ATCC 17023 / DSM 158 / JCM 6121 / CCUG 31486 / LMG 2827 / NBRC 12203 / NCIMB 8253 / ATH 2.4.1.) (Rhodobacter sphaeroides).